An 84-amino-acid chain; its full sequence is Cell division topological specificity factor (84 aa).

The protein belongs to the MinE family.

Prevents the cell division inhibition by proteins MinC and MinD at internal division sites while permitting inhibition at polar sites. This ensures cell division at the proper site by restricting the formation of a division septum at the midpoint of the long axis of the cell. This chain is Cell division topological specificity factor, found in Burkholderia multivorans (strain ATCC 17616 / 249).